The following is an 857-amino-acid chain: MTTPEGDALAMRVEPVGLETEMQRSYLDYAMSVIVSRALPDVRDGLKPVHRRVLYAMYDGGYRPERGFYKCARVVGDVMGNYHPHGDSSIYDALVRLAQPWSMRMPLVDSNGNFGSPGNDPAAAMRYTECKMAPLSMEMVRDIDEETVDFTDNYDGRSQEPTVLPARFPNLLINGSAGIAVGMATNIPPHNLREVAAGAQWYLENYEASHEELLDALIERIKGPDFPTGALVVGRKGIEEAYRTGRGSITMRAVVEVEEIQNRQCLVVTELPYQTNPDNLAQKIADLVKDGKVGGIADVRDETSSRTGQRLVIVLKRDAVAKVVLNNLYKHTDLQSNFGANMLALVDGVPRTLSLDAFIRHWVNHQIEVIVRRTRFRLRKAEERAHILRGLLKALDAIDEVIALIRRSDTVEIARGGLMDLLEIDEIQANAILEMQLRRLAALERQKIVREHDELQAKITEYNEILASPVRQRGIVSEELTALVEKYGDDRKTKLIPYEGDMSIEDLIAEEDIVVTVTRGGYIKRTKTDDYRAQKRGGKGVRGTKLKEDDIVNHFFVSTTHHWLLFFTNKGRVYRAKAYELPDAGRDARGQHVANLLAFQPDETIAQIRAIRDYEAVPYLVLATKAGLVKKTPLKDYDSPRSGGVIAINLREQADGSDDELIGAELVSAEDDLLLISKKAQSIRFTASDDTLRPMGRATSGVKGMSFREGDELLSMNVVRAGTFVFTATDGGYAKRTSVDEYRVQGRGGLGIKAAKIVEDRGSLVGALVVEEHDEILAITLSGGVIRTRVNGVRETGRDTMGVQLINLGKRDAVVGIARNAEAGREAEEVDGDVAVDETAEGAATTGTDEGEAPSAE.

The region spanning 39-507 (LPDVRDGLKP…YEGDMSIEDL (469 aa)) is the Topo IIA-type catalytic domain. The active-site O-(5'-phospho-DNA)-tyrosine intermediate is Tyr-127. The short motif at 534–540 (QKRGGKG) is the GyrA-box element. The interval 825-857 (REAEEVDGDVAVDETAEGAATTGTDEGEAPSAE) is disordered. Positions 828–840 (EEVDGDVAVDETA) are enriched in acidic residues.

It belongs to the type II topoisomerase GyrA/ParC subunit family. As to quaternary structure, heterotetramer, composed of two GyrA and two GyrB chains. In the heterotetramer, GyrA contains the active site tyrosine that forms a transient covalent intermediate with DNA, while GyrB binds cofactors and catalyzes ATP hydrolysis.

It localises to the cytoplasm. The catalysed reaction is ATP-dependent breakage, passage and rejoining of double-stranded DNA.. Its function is as follows. A type II topoisomerase that negatively supercoils closed circular double-stranded (ds) DNA in an ATP-dependent manner to modulate DNA topology and maintain chromosomes in an underwound state. Negative supercoiling favors strand separation, and DNA replication, transcription, recombination and repair, all of which involve strand separation. Also able to catalyze the interconversion of other topological isomers of dsDNA rings, including catenanes and knotted rings. Type II topoisomerases break and join 2 DNA strands simultaneously in an ATP-dependent manner. The sequence is that of DNA gyrase subunit A from Streptomyces coelicolor (strain ATCC BAA-471 / A3(2) / M145).